Here is a 159-residue protein sequence, read N- to C-terminus: Cyclic pyranopterin monophosphate synthase (159 aa).

Substrate contacts are provided by residues 76 to 78 and 114 to 115; these read LCH and ME. Aspartate 129 is an active-site residue.

Belongs to the MoaC family. As to quaternary structure, homohexamer; trimer of dimers.

It catalyses the reaction (8S)-3',8-cyclo-7,8-dihydroguanosine 5'-triphosphate = cyclic pyranopterin phosphate + diphosphate. Its pathway is cofactor biosynthesis; molybdopterin biosynthesis. Its function is as follows. Catalyzes the conversion of (8S)-3',8-cyclo-7,8-dihydroguanosine 5'-triphosphate to cyclic pyranopterin monophosphate (cPMP). The chain is Cyclic pyranopterin monophosphate synthase from Psychromonas ingrahamii (strain DSM 17664 / CCUG 51855 / 37).